Reading from the N-terminus, the 690-residue chain is MEKILQMAEGIDIGEMPSYDLVLSKPSKGQKRHLSTCDGQNPPKKQAGSKFHARPRFEPVHFVASSSKDERQEDPYGPQTKEVNEQTHFASMPRDIYQDYTQDSFSIQDGNSQYCDSSGFILTKDQPVTANMYFDSGNPAPSTTSQQANSQSTPEPSPSQTFPESVVAEKQYFIEKLTATIWKNLSNPEMTSGSDKINYTYMLTRCIQACKTNPEYIYAPLKEIPPADIPKNKKLLTDGYACEVRCQNIYLTTGYAGSKNGSRDRATELAVKLLQKRIEVRVVRRKFKHTFGEDLVVCQIGMSSYEFPPALKPPEDLVVLGKDASGQPIFNASAKHWTNFVITENANDAIGILNNSASFNKMSIEYKYEMMPNRTWRCRVFLQDHCLAEGYGTKKTSKHAAADEALKILQKTQPTYPSVKSSQCHTGSSPRGSGKKKDIKDLVVYENSSNPVCTLNDTAQFNRMTVEYVYERMTGLRWKCKVILESEVIAEAVGVKKTVKYEAAGEAVKTLKKTQPTVINNLKKGAVEDVISRNEIQGRSAEEAYKQQIKEDNIGNQLLRKMGWTGGGLGKSGEGIREPISVKEQHKREGLGLDVERVNKIAKRDIEQIIRNYARSESHTDLTFSRELTNDERKQIHQIAQKYGLKSKSHGVGHDRYLVVGRKRRKEDLLDQLKQEGQVGHYELVMPQAN.

The tract at residues 1–296 is active repression domain; it reads MEKILQMAEG…FKHTFGEDLV (296 aa). Residues 25 to 45 carry the Nuclear localization signal motif; that stretch reads KPSKGQKRHLSTCDGQNPPKK. Disordered stretches follow at residues 27–87 and 132–163; these read SKGQ…NEQT and MYFD…QTFP. K68 participates in a covalent cross-link: Glycyl lysine isopeptide (Lys-Gly) (interchain with G-Cter in SUMO2). The span at 142–163 shows a compositional bias: low complexity; that stretch reads STTSQQANSQSTPEPSPSQTFP. The DNA-binding element occupies 296-388; the sequence is VVCQIGMSSY…RVFLQDHCLA (93 aa). Residues 414–431 are compositionally biased toward polar residues; it reads PTYPSVKSSQCHTGSSPR. Residues 414–437 form a disordered region; sequence PTYPSVKSSQCHTGSSPRGSGKKK. K500 participates in a covalent cross-link: Glycyl lysine isopeptide (Lys-Gly) (interchain with G-Cter in SUMO2). Residues 551 to 596 form the G-patch domain; the sequence is EDNIGNQLLRKMGWTGGGLGKSGEGIREPISVKEQHKREGLGLDVE. The 65-residue stretch at 600–664 folds into the R3H domain; it reads KIAKRDIEQI…DRYLVVGRKR (65 aa). S618 bears the Phosphoserine mark. Residues K666 and K674 each participate in a glycyl lysine isopeptide (Lys-Gly) (interchain with G-Cter in SUMO2) cross-link.

Interacts with NF-kappa-B. Interacts with XRN2. Interacts (via G-patch domain) with DHX15; promoting the RNA helicase activity of DHX15. As to expression, widely and constitutively expressed. Expressed at lower level in colon, peripheral blood lymphocytes, lung and kidney.

It localises to the nucleus. It is found in the nucleolus. In terms of biological role, enhances the ATPase activity of DHX15 by acting like a brace that tethers mobile sections of DHX15 together, stabilizing a functional conformation with high RNA affinity of DHX15. Involved in the constitutive silencing of the interferon beta promoter, independently of the virus-induced signals, and in the inhibition of the basal and cytokine-induced iNOS promoter activity. Also involved in the regulation of IL-8 transcription. May also act as a DNA-binding transcription regulator: interacts with a specific negative regulatory element (NRE) 5'-AATTCCTCTGA-3' to mediate transcriptional repression of certain NK-kappa-B responsive genes. The sequence is that of NF-kappa-B-repressing factor from Homo sapiens (Human).